A 440-amino-acid polypeptide reads, in one-letter code: Xaa-Pro dipeptidase (440 aa).

Residues Asp-244, Asp-255, His-335, Glu-380, and Glu-419 each contribute to the Mn(2+) site.

Belongs to the peptidase M24B family. Bacterial-type prolidase subfamily. Mn(2+) is required as a cofactor.

The enzyme catalyses Xaa-L-Pro dipeptide + H2O = an L-alpha-amino acid + L-proline. In terms of biological role, splits dipeptides with a prolyl residue in the C-terminal position. The protein is Xaa-Pro dipeptidase of Shewanella putrefaciens (strain CN-32 / ATCC BAA-453).